The following is a 193-amino-acid chain: 3-isopropylmalate dehydratase small subunit (193 aa).

Belongs to the LeuD family. LeuD type 1 subfamily. As to quaternary structure, heterodimer of LeuC and LeuD.

The catalysed reaction is (2R,3S)-3-isopropylmalate = (2S)-2-isopropylmalate. It participates in amino-acid biosynthesis; L-leucine biosynthesis; L-leucine from 3-methyl-2-oxobutanoate: step 2/4. In terms of biological role, catalyzes the isomerization between 2-isopropylmalate and 3-isopropylmalate, via the formation of 2-isopropylmaleate. The polypeptide is 3-isopropylmalate dehydratase small subunit (Bacillus cereus (strain ATCC 10987 / NRS 248)).